A 204-amino-acid chain; its full sequence is Translation initiation factor IF-3 (204 aa).

The tract at residues 169–204 is disordered; it reads VPKAAPKRDSGRSESAQEAPTARSAEASRPEAPANA.

The protein belongs to the IF-3 family. As to quaternary structure, monomer.

It is found in the cytoplasm. IF-3 binds to the 30S ribosomal subunit and shifts the equilibrium between 70S ribosomes and their 50S and 30S subunits in favor of the free subunits, thus enhancing the availability of 30S subunits on which protein synthesis initiation begins. The sequence is that of Translation initiation factor IF-3 from Deinococcus geothermalis (strain DSM 11300 / CIP 105573 / AG-3a).